Here is a 152-residue protein sequence, read N- to C-terminus: Large ribosomal subunit protein eL14 (152 aa).

This sequence belongs to the eukaryotic ribosomal protein eL14 family.

The chain is Large ribosomal subunit protein eL14 (RPL14) from Lumbricus rubellus (Humus earthworm).